An 840-amino-acid polypeptide reads, in one-letter code: Protein translocase subunit SecA (840 aa).

ATP is bound by residues Gln-89, 107 to 111, and Asp-514; that span reads GEGKT.

The protein belongs to the SecA family. Monomer and homodimer. Part of the essential Sec protein translocation apparatus which comprises SecA, SecYEG and auxiliary proteins SecDF-YajC and YidC.

Its subcellular location is the cell inner membrane. The protein localises to the cytoplasm. The enzyme catalyses ATP + H2O + cellular proteinSide 1 = ADP + phosphate + cellular proteinSide 2.. Functionally, part of the Sec protein translocase complex. Interacts with the SecYEG preprotein conducting channel. Has a central role in coupling the hydrolysis of ATP to the transfer of proteins into and across the cell membrane, serving as an ATP-driven molecular motor driving the stepwise translocation of polypeptide chains across the membrane. This chain is Protein translocase subunit SecA, found in Blochmanniella floridana.